The chain runs to 315 residues: Methionyl-tRNA formyltransferase (315 aa).

113–116 provides a ligand contact to (6S)-5,6,7,8-tetrahydrofolate; it reads SLLP.

It belongs to the Fmt family.

The catalysed reaction is L-methionyl-tRNA(fMet) + (6R)-10-formyltetrahydrofolate = N-formyl-L-methionyl-tRNA(fMet) + (6S)-5,6,7,8-tetrahydrofolate + H(+). Attaches a formyl group to the free amino group of methionyl-tRNA(fMet). The formyl group appears to play a dual role in the initiator identity of N-formylmethionyl-tRNA by promoting its recognition by IF2 and preventing the misappropriation of this tRNA by the elongation apparatus. The chain is Methionyl-tRNA formyltransferase from Shigella boydii serotype 18 (strain CDC 3083-94 / BS512).